The primary structure comprises 693 residues: Elongation factor G (693 aa).

A tr-type G domain is found at 8–282 (EKTRNIGIMA…AVIDYLPSPL (275 aa)). GTP contacts are provided by residues 17-24 (AHVDAGKT), 81-85 (DTPGH), and 135-138 (NKMD).

Belongs to the TRAFAC class translation factor GTPase superfamily. Classic translation factor GTPase family. EF-G/EF-2 subfamily.

It is found in the cytoplasm. In terms of biological role, catalyzes the GTP-dependent ribosomal translocation step during translation elongation. During this step, the ribosome changes from the pre-translocational (PRE) to the post-translocational (POST) state as the newly formed A-site-bound peptidyl-tRNA and P-site-bound deacylated tRNA move to the P and E sites, respectively. Catalyzes the coordinated movement of the two tRNA molecules, the mRNA and conformational changes in the ribosome. This is Elongation factor G from Streptococcus pneumoniae (strain P1031).